Here is a 185-residue protein sequence, read N- to C-terminus: Small ribosomal subunit protein uS5 (185 aa).

Residues Phe-18–Val-81 enclose the S5 DRBM domain. The segment at Ser-157 to Asp-185 is disordered. Residues Arg-176–Asp-185 show a composition bias toward basic and acidic residues.

This sequence belongs to the universal ribosomal protein uS5 family. As to quaternary structure, part of the 30S ribosomal subunit. Contacts proteins S4 and S8.

Its function is as follows. With S4 and S12 plays an important role in translational accuracy. In terms of biological role, located at the back of the 30S subunit body where it stabilizes the conformation of the head with respect to the body. The chain is Small ribosomal subunit protein uS5 from Xanthobacter autotrophicus (strain ATCC BAA-1158 / Py2).